A 164-amino-acid chain; its full sequence is UPF0304 protein NT01EI_2691 (164 aa).

This sequence belongs to the UPF0304 family.

This chain is UPF0304 protein NT01EI_2691, found in Edwardsiella ictaluri (strain 93-146).